Reading from the N-terminus, the 436-residue chain is Transcription factor MYB124 (436 aa).

Residues 1–11 (MEDTKKKKKKN) are compositionally biased toward basic residues. The segment at 1–23 (MEDTKKKKKKNINNNQDSKKKER) is disordered. A Nuclear localization signal 1 motif is present at residues 8-15 (KKKNINNN). 2 HTH myb-type domains span residues 20–71 (KKER…YTYL) and 72–126 (NSDF…KKRA). 2 DNA-binding regions (H-T-H motif) span residues 48–71 (WAII…YTYL) and 99–122 (WTEI…TTLC). Positions 151 to 158 (PRKSENET) match the Nuclear localization signal 2 motif. Residues 309 to 328 (SWRQPDLHDSPASSEYSSGS) are disordered. The span at 319–328 (PASSEYSSGS) shows a compositional bias: polar residues.

In terms of assembly, interacts with RBR1. As to expression, expressed in all shoot organs with higher levels in leaves, stems, flowers, siliques and floral buds. Also detected in roots tips.

It localises to the nucleus. Transcription factor that binds to DNA in promoters cis-regulatory element 5'-GGCGCGC-3' of cell cycle genes, including cyclins, cyclin-dependent kinases (CDKs), and components of the pre-replication complex. Binds to DNA in promoters cis-regulatory element 5'-AGCCG-3' of auxin regulated genes (e.g. PIN3 and PIN7). Together with FAMA and MYB88, ensures that stomata contain just two guard cells (GCs) by enforcing a single symmetric precursor cell division before stomatal maturity. Represses the expression of the mitosis-inducing factors CDKB1-1 and CDKA-1, specifically required for the last guard mother cells (GMC) symmetric divisions in the stomatal pathway. Represses CYCA2-3 in newly formed guard cells. Together with MYB88, regulates stomata spacing by restricting divisions late in the stomatal cell lineage thus limiting the number of GMC divisions. In collaboration with CDKB1-1 and CDKB1-2, restrict the G1/S transition and chloroplast and nuclear number during stomatal formation, and normally maintain fate and developmental progression throughout the stomatal cell lineage. Also involved in the shape regulation of pavement cells. Involved in sensing and/or transducing abiotic stress (e.g. drought and salt), probably via the positive regulation of NAC019. Regulates female reproduction being required for entry into megasporogenesis, probably via the regulation of cell cycle genes. Promotes histone H3K27me3 marks and represses stem cell gene expression. Required for lateral roots (LRs) initiation via the regulation of PIN3 expression in an auxin-dependent manner. Involved in responses to gravity stimulation in primary roots by regulating the transcription of PIN3 and PIN7 in gravity-sensing cells, thus modulating auxin asymmetric redistribution. The chain is Transcription factor MYB124 from Arabidopsis thaliana (Mouse-ear cress).